The primary structure comprises 152 residues: UPF0756 membrane protein Moth_1009 (152 aa).

4 helical membrane passes run 5-25 (LIIL…VALA), 41-61 (IFPF…IAAI), 75-95 (LGHV…LITT), and 117-137 (LILG…GPFI).

Belongs to the UPF0756 family.

Its subcellular location is the cell membrane. This is UPF0756 membrane protein Moth_1009 from Moorella thermoacetica (strain ATCC 39073 / JCM 9320).